The sequence spans 457 residues: Argininosuccinate lyase (457 aa).

The protein belongs to the lyase 1 family. Argininosuccinate lyase subfamily.

It is found in the cytoplasm. The enzyme catalyses 2-(N(omega)-L-arginino)succinate = fumarate + L-arginine. It participates in amino-acid biosynthesis; L-arginine biosynthesis; L-arginine from L-ornithine and carbamoyl phosphate: step 3/3. This chain is Argininosuccinate lyase, found in Cronobacter sakazakii (strain ATCC BAA-894) (Enterobacter sakazakii).